A 252-amino-acid polypeptide reads, in one-letter code: Imidazole glycerol phosphate synthase subunit HisF (252 aa).

Catalysis depends on residues Asp11 and Asp130.

The protein belongs to the HisA/HisF family. In terms of assembly, heterodimer of HisH and HisF.

The protein localises to the cytoplasm. The enzyme catalyses 5-[(5-phospho-1-deoxy-D-ribulos-1-ylimino)methylamino]-1-(5-phospho-beta-D-ribosyl)imidazole-4-carboxamide + L-glutamine = D-erythro-1-(imidazol-4-yl)glycerol 3-phosphate + 5-amino-1-(5-phospho-beta-D-ribosyl)imidazole-4-carboxamide + L-glutamate + H(+). It participates in amino-acid biosynthesis; L-histidine biosynthesis; L-histidine from 5-phospho-alpha-D-ribose 1-diphosphate: step 5/9. In terms of biological role, IGPS catalyzes the conversion of PRFAR and glutamine to IGP, AICAR and glutamate. The HisF subunit catalyzes the cyclization activity that produces IGP and AICAR from PRFAR using the ammonia provided by the HisH subunit. The protein is Imidazole glycerol phosphate synthase subunit HisF of Aromatoleum aromaticum (strain DSM 19018 / LMG 30748 / EbN1) (Azoarcus sp. (strain EbN1)).